Consider the following 1021-residue polypeptide: Immunoglobulin superfamily member 2 (1021 aa).

The N-terminal stretch at 1–20 is a signal peptide; that stretch reads MAGISYVASFFLLLTKLSIG. The Extracellular portion of the chain corresponds to 21–954; that stretch reads QREVTVQKGP…LPSRICSSAP (934 aa). 7 Ig-like C2-type domains span residues 22–139, 144–265, 279–389, 408–525, 541–651, 656–794, and 808–925; these read REVT…AKTN, PDTL…WMFI, PAVK…RTGS, PAAR…RDLS, LQVS…NSLY, PRAS…WHKL, and PTGS…KWIN. Disulfide bonds link cysteine 43–cysteine 121 and cysteine 168–cysteine 249. Residue asparagine 44 is glycosylated (N-linked (GlcNAc...) asparagine). An EWI motif motif is present at residues 253–255; that stretch reads EWI. 5 disulfide bridges follow: cysteine 304–cysteine 377, cysteine 434–cysteine 511, cysteine 562–cysteine 640, cysteine 697–cysteine 778, and cysteine 834–cysteine 909. Asparagine 322 carries N-linked (GlcNAc...) asparagine glycosylation. Residues 955 to 975 traverse the membrane as a helical segment; it reads LLYFLFICPFVLLLLLLISLL. Topologically, residues 976-1021 are cytoplasmic; the sequence is CLYWKARKLSTLRSNTRKEKALWVDLKEAGGVTTNRREDEEEDEGN.

Post-translationally, N-glycosylated. In terms of tissue distribution, expressed in lung, thymus and small intestine. Detected in cutaneous dendritic cells, activated T-cells, monocytes and granulocytes as well as with epithelial cells with dendritic morphology. Expressed in some leukemic cells, the CD4(+) CD56(+) blastic tumor cells, as well as in Langerhans cells from LCH (Langerhans cell histiocytosis) patients.

The protein resides in the membrane. In terms of biological role, plays a role as inhibitor of T-cells proliferation induced by CD3. Inhibits expression of IL2RA on activated T-cells and secretion of IL2. Inhibits tyrosine kinases that are required for IL2 production and cellular proliferation. Inhibits phospholipase C-gamma-1/PLCG1 phosphorylation and subsequent CD3-induced changes in intracellular free calcium. Prevents nuclear translocation of nuclear factor of activated T-cell to the nucleus. Plays a role in the inhibition of T-cell proliferation via IL10 secretion by cutaneous dendritic cells. May be a marker of CD4(+) CD56(+) leukemic tumor cells. In Homo sapiens (Human), this protein is Immunoglobulin superfamily member 2 (CD101).